The chain runs to 276 residues: AT-hook motif nuclear-localized protein 17 (276 aa).

Basic and acidic residues predominate over residues 1–10 (MKGEYREQKS). 2 disordered regions span residues 1–80 (MKGE…RDTD) and 212–248 (AEEEQKHSAGTGEREGQSPPVSGGGEESGQMAGSGGE). 2 stretches are compositionally biased toward low complexity: residues 20 to 31 (HQQQQQQQQQQH) and 40 to 49 (SSTVTPTVDD). The a.T hook DNA-binding region spans 56-68 (RRPRGRPPGSKNK). Residues 80–230 (DPPMSPYILE…GTGEREGQSP (151 aa)) enclose the PPC domain. Positions 212-227 (AEEEQKHSAGTGEREG) are enriched in basic and acidic residues. Residues 233–248 (SGGGEESGQMAGSGGE) show a composition bias toward gly residues.

The protein localises to the nucleus. Functionally, transcription factor that specifically binds AT-rich DNA sequences related to the nuclear matrix attachment regions (MARs). This chain is AT-hook motif nuclear-localized protein 17, found in Arabidopsis thaliana (Mouse-ear cress).